We begin with the raw amino-acid sequence, 369 residues long: Xylene/toluene monooxygenase hydroxylase component XylM (369 aa).

The next 3 membrane-spanning stretches (helical) occupy residues 8–28 (LIPV…YWVW), 60–80 (LTQY…VFGV), and 91–111 (LQVA…TLPV). Residues histidine 113, histidine 117, histidine 143, histidine 147, and histidine 148 each coordinate Fe cation. A helical membrane pass occupies residues 207-227 (VALLLALPGLVSYLGGPALGL). Positions 282, 285, and 286 each coordinate Fe cation. Residues 305–325 (MPSLFVCFLLGLIPPLWFALI) form a helical membrane-spanning segment.

Belongs to the fatty acid desaturase type 1 family. AlkB subfamily. In terms of assembly, the xylene/toluene monooxygenase is composed of two subunits: the electron transfer component XylA and the hydroxylase component XylM. It depends on Fe(2+) as a cofactor.

The protein resides in the cell inner membrane. It carries out the reaction m-xylene + 2 reduced [2Fe-2S]-[ferredoxin] + O2 + 2 H(+) = 3-methylbenzyl alcohol + 2 oxidized [2Fe-2S]-[ferredoxin] + H2O. It catalyses the reaction p-xylene + 2 reduced [2Fe-2S]-[ferredoxin] + O2 + 2 H(+) = 4-methylbenzyl alcohol + 2 oxidized [2Fe-2S]-[ferredoxin] + H2O. The enzyme catalyses toluene + 2 reduced [2Fe-2S]-[ferredoxin] + O2 + 2 H(+) = benzyl alcohol + 2 oxidized [2Fe-2S]-[ferredoxin] + H2O. Functionally, component of a monooxygenase that catalyzes the first step in the degradation of xylenes and toluenes. XylM catalyzes the hydroxylation of the methyl side chain of xylenes and toluenes. The electrons are provided by the electron transfer component XylA. The best substrates are m-xylene and p-xylene, followed by toluene. Shows weak activity with o-xylene. In vitro, is also active with substituted compounds, such as chlorotoluenes. Cannot use benzyl alcohol. This chain is Xylene/toluene monooxygenase hydroxylase component XylM, found in Pseudomonas putida (Arthrobacter siderocapsulatus).